We begin with the raw amino-acid sequence, 581 residues long: Phosphoglucomutase, cytoplasmic (581 aa).

Residues M1–T11 show a composition bias toward basic and acidic residues. Positions M1–T20 are disordered. Positions 24 and 123 each coordinate alpha-D-glucose 1,6-bisphosphate. S123 functions as the Phosphoserine intermediate in the catalytic mechanism. Mg(2+) contacts are provided by S123, D298, D300, and D302. Phosphoserine is present on S123. Alpha-D-glucose 1,6-bisphosphate-binding residues include D302, R303, T366, E385, S387, and K398.

It belongs to the phosphohexose mutase family. As to quaternary structure, monomer. The cofactor is Mg(2+).

The protein localises to the cytoplasm. It catalyses the reaction alpha-D-glucose 1-phosphate = alpha-D-glucose 6-phosphate. The catalysed reaction is O-phospho-L-seryl-[protein] + alpha-D-glucose 1-phosphate = alpha-D-glucose 1,6-bisphosphate + L-seryl-[protein]. It carries out the reaction alpha-D-glucose 1,6-bisphosphate + L-seryl-[protein] = O-phospho-L-seryl-[protein] + alpha-D-glucose 6-phosphate. In terms of biological role, catalyzes the reversible isomerization of alpha-D-glucose 1-phosphate to alpha-D-glucose 6-phosphate. The mechanism proceeds via the intermediate compound alpha-D-glucose 1,6-bisphosphate. This enzyme participates in both the breakdown and synthesis of glucose. This is Phosphoglucomutase, cytoplasmic (PGM1) from Bromus inermis (Smooth brome grass).